Reading from the N-terminus, the 465-residue chain is Alpha-galacturonidase (465 aa).

11–78 (ITIAYIGGGS…GKWLYKACET (68 aa)) serves as a coordination point for NAD(+). N157 is a substrate binding site. C179 serves as a coordination point for Mn(2+). H180 functions as the Proton donor in the catalytic mechanism. H216 is a Mn(2+) binding site.

This sequence belongs to the glycosyl hydrolase 4 family. As to quaternary structure, homotetramer. NAD(+) is required as a cofactor. Mn(2+) serves as cofactor.

It carries out the reaction [(1-&gt;4)-alpha-D-galacturonosyl](n) + H2O = alpha-D-galacturonate + [(1-&gt;4)-alpha-D-galacturonosyl](n-1). Functionally, alpha-galacturonidase able to catalyze the hydrolysis of the chromogenic substrate p-nitrophenyl-alpha-D-galacturonic acid (pNPalphaGalUA). It is probable that alpha-1,4-di-galacturonate (GalUA(2)) is the naturally occurring substrate. The sequence is that of Alpha-galacturonidase from Thermoanaerobacterium saccharolyticum (strain DSM 8691 / JW/SL-YS485).